Reading from the N-terminus, the 456-residue chain is Aromatic amino acid transport protein AroP (456 aa).

Topologically, residues 1-18 are cytoplasmic; sequence MEGQQHGEQLKRGLKNRH. The chain crosses the membrane as a helical span at residues 19–39; that stretch reads IQLIALGGAIGTGLFLGSASV. At 40–41 the chain is on the periplasmic side; that stretch reads IQ. The chain crosses the membrane as a helical span at residues 42-62; the sequence is SAGPGIILGYAIAGFIAFLIM. Over 63–85 the chain is Cytoplasmic; sequence RQLGEMVVEEPVAGSFSHFAYKY. Residues 86 to 106 traverse the membrane as a helical segment; sequence WGSFAGFASGWNYWVLYVLVA. The Periplasmic segment spans residues 107-116; it reads MAELTAVGKY. A helical membrane pass occupies residues 117-137; sequence IQFWYPEIPTWVSAAVFFVVI. At 138 to 154 the chain is on the cytoplasmic side; that stretch reads NAINLTNVKVFGEMEFW. A helical membrane pass occupies residues 155 to 175; that stretch reads FAIIKVIAVVAMIIFGAWLLF. Over 176 to 200 the chain is Periplasmic; sequence SGNGGPQASVSNLWDQGGFLPHGFT. The chain crosses the membrane as a helical span at residues 201–221; the sequence is GLVMMMAIIMFSFGGLELVGI. The Cytoplasmic segment spans residues 222–239; it reads TAAEADNPEQSIPKATNQ. A helical membrane pass occupies residues 240 to 260; it reads VIYRILIFYIGSLAVLLSLMP. The Periplasmic portion of the chain corresponds to 261–270; sequence WTRVTADTSP. The chain crosses the membrane as a helical span at residues 271–291; it reads FVLIFHELGDTFVANALNIVV. Topologically, residues 292 to 332 are cytoplasmic; sequence LTAALSVYNSCVYCNSRMLFGLAQQGNAPKALASVDKRGVP. Residues 333 to 353 form a helical membrane-spanning segment; that stretch reads VNTILVSALVTALCVLINYLA. At 354–357 the chain is on the periplasmic side; sequence PESA. The helical transmembrane segment at 358 to 378 threads the bilayer; it reads FGLLMALVVSALVINWAMISL. Topologically, residues 379–398 are cytoplasmic; sequence AHMKFRRAKQEQGVVTRFPA. The chain crosses the membrane as a helical span at residues 399 to 419; it reads LLYPLGNWICLLFMAAVLVIM. At 420–424 the chain is on the periplasmic side; sequence LMTPG. The helical transmembrane segment at 425 to 445 threads the bilayer; sequence MAISVYLIPVWLIVLGIGYLF. The Cytoplasmic portion of the chain corresponds to 446 to 456; the sequence is KEKTAKAVKAH.

It belongs to the amino acid-polyamine-organocation (APC) superfamily. Amino acid transporter (AAT) (TC 2.A.3.1) family.

Its subcellular location is the cell inner membrane. The enzyme catalyses L-phenylalanine(in) + H(+)(in) = L-phenylalanine(out) + H(+)(out). It catalyses the reaction L-tryptophan(in) + H(+)(in) = L-tryptophan(out) + H(+)(out). The catalysed reaction is L-tyrosine(in) + H(+)(in) = L-tyrosine(out) + H(+)(out). Permease that is involved in the active transport across the cytoplasmic membrane of all three aromatic amino acids, phenylalanine, tyrosine and tryptophan. In Escherichia coli O6:H1 (strain CFT073 / ATCC 700928 / UPEC), this protein is Aromatic amino acid transport protein AroP (aroP).